Consider the following 142-residue polypeptide: Large ribosomal subunit protein uL11 (142 aa).

Belongs to the universal ribosomal protein uL11 family. As to quaternary structure, part of the ribosomal stalk of the 50S ribosomal subunit. Interacts with L10 and the large rRNA to form the base of the stalk. L10 forms an elongated spine to which L12 dimers bind in a sequential fashion forming a multimeric L10(L12)X complex. Post-translationally, one or more lysine residues are methylated.

Forms part of the ribosomal stalk which helps the ribosome interact with GTP-bound translation factors. This Xanthomonas campestris pv. campestris (strain 8004) protein is Large ribosomal subunit protein uL11.